Consider the following 494-residue polypeptide: Apolipoprotein N-acyltransferase (494 aa).

6 helical membrane passes run T16–I36, L41–L61, S62–S82, L133–G153, G173–F193, and L202–A222. In terms of domain architecture, CN hydrolase spans W235 to V461. Residue E276 is the Proton acceptor of the active site. K325 is an active-site residue. C373 (nucleophile) is an active-site residue. A helical transmembrane segment spans residues Y468–A488.

This sequence belongs to the CN hydrolase family. Apolipoprotein N-acyltransferase subfamily.

Its subcellular location is the cell inner membrane. It carries out the reaction N-terminal S-1,2-diacyl-sn-glyceryl-L-cysteinyl-[lipoprotein] + a glycerophospholipid = N-acyl-S-1,2-diacyl-sn-glyceryl-L-cysteinyl-[lipoprotein] + a 2-acyl-sn-glycero-3-phospholipid + H(+). Its pathway is protein modification; lipoprotein biosynthesis (N-acyl transfer). Catalyzes the phospholipid dependent N-acylation of the N-terminal cysteine of apolipoprotein, the last step in lipoprotein maturation. The sequence is that of Apolipoprotein N-acyltransferase from Prochlorococcus marinus (strain SARG / CCMP1375 / SS120).